We begin with the raw amino-acid sequence, 132 residues long: Translation initiation factor 5A (132 aa).

The residue at position 36 (K36) is a Hypusine.

It belongs to the eIF-5A family.

It is found in the cytoplasm. Its function is as follows. Functions by promoting the formation of the first peptide bond. The chain is Translation initiation factor 5A (eIF5A) from Pyrobaculum islandicum (strain DSM 4184 / JCM 9189 / GEO3).